A 317-amino-acid chain; its full sequence is MNAHMLNLLVIVIFVVSFDVQALSPHYYDHTCPQADHIVTNAVKKAMSNDQTVPAALLRMHFHDCFVRGCDGSVLLDSKGKNKAEKDGPPNISLHAFYVIDNAKKALEEQCPGIVSCADILSLAARDAVALSGGPTWAVPKGRKDGRISKAIETRQLPAPTFNISQLRQNFGQRGLSMHDLVALSGGHTLGFAHCSSFQNRLHKFNTQKEVDPTLNPSFAARLEGVCPAHNTVKNAGSNMDGTVTSFDNIYYKMLIQGKSLFSSDESLLAVPSTKKLVAKYANSNEEFERAFVKSMIKMSSISGNGNEVRLNCRRVR.

The first 22 residues, 1–22, serve as a signal peptide directing secretion; the sequence is MNAHMLNLLVIVIFVVSFDVQA. Disulfide bonds link cysteine 32–cysteine 111, cysteine 65–cysteine 70, cysteine 117–cysteine 313, and cysteine 195–cysteine 227. The active-site Proton acceptor is histidine 63. Residues aspartate 64, valine 67, glycine 69, aspartate 71, and serine 73 each coordinate Ca(2+). Proline 158 is a binding site for substrate. N-linked (GlcNAc...) asparagine glycosylation occurs at asparagine 163. Histidine 188 is a binding site for heme b. Threonine 189 is a Ca(2+) binding site. Residues aspartate 241, threonine 243, and aspartate 248 each contribute to the Ca(2+) site.

This sequence belongs to the peroxidase family. Classical plant (class III) peroxidase subfamily. Requires heme b as cofactor. Ca(2+) serves as cofactor. In terms of tissue distribution, expressed in the whole plant, but preferentially in roots.

Its subcellular location is the secreted. It catalyses the reaction 2 a phenolic donor + H2O2 = 2 a phenolic radical donor + 2 H2O. Removal of H(2)O(2), oxidation of toxic reductants, biosynthesis and degradation of lignin, suberization, auxin catabolism, response to environmental stresses such as wounding, pathogen attack and oxidative stress. These functions might be dependent on each isozyme/isoform in each plant tissue. The protein is Peroxidase 64 (PER64) of Arabidopsis thaliana (Mouse-ear cress).